The primary structure comprises 128 residues: Kinetoplast-associated protein 4 (128 aa).

The propeptide occupies 1–10 (MLRFVPRRLA). The tract at residues 60–87 (AHPGFKRKEKEPKELKAAKAAKTSTPRA) is disordered. A compositionally biased stretch (basic and acidic residues) spans 65 to 76 (KRKEKEPKELKA).

The protein belongs to the KAP family. As to quaternary structure, associates with the kinetoplast DNA network.

It localises to the mitochondrion matrix. The protein localises to the kinetoplast. In terms of biological role, histone H1-like DNA-binding protein involved in the organization and segregation of kinetoplast DNA (kDNA). The mitochondrial DNA of kinetoplastid protozoa consists of about 5,000 minicircles and 20 to 30 maxicircles. These circular DNAs are held together by catenation into a highly organized compact disk structure referred to as a kinetoplast DNA (kDNA) network. Binds preferentially to a specific fragment of minicircle DNA and is able to compact kDNA networks through DNA charge neutralization and condensation. The polypeptide is Kinetoplast-associated protein 4 (KAP4) (Crithidia fasciculata).